Reading from the N-terminus, the 293-residue chain is uncharacterized protein (293 aa).

Residues 65–89 adopt a coiled-coil conformation; sequence LQKYLENIKNKKLNLNKQSNNQTNN. The segment at 81–112 is disordered; the sequence is KQSNNQTNNQTNNQTNNQTNNQTNNIRPQINN.

It is found in the virion. This is an uncharacterized protein from Acanthamoeba polyphaga mimivirus (APMV).